The primary structure comprises 918 residues: MQKDGTRSSRRMEEGDRRNGSTGSSGSVSRELGRGFSYYNKYLARLQQNLRDTKRFFRDIKHTYSGAPGGPDTDIKGAEGDLGQLHSITFPRQEEEYLKLTVRCRPCIFILGQSCSSRGRVANSLLGDQLLPILTHCGSECCKRRRIRFRYGKQTLVSLALPEQYELVHELVAHQGKWDTIPEEDLDVPEDEEDPAHRLAELEVTLPHQLLQDVDIVVSPCRSSQAVSMTLEDYVDHVQSIVVYAVCEERLSQQDEEELTEIKEKYKLPVFFIRTSSTRDRLIGGSEGVRSALYEQLMELGFLKRGLCNCGAAGSGSTAPSMLVEQFEKLRQVSTFSRQVLQMHLVDAAIVLNMVHSRCLDLFINKAFDMHRDLQITPKRLEYTRQKENELYESLMRISDRKQEELKDMIVETLNSMREQLLEDAANMQFKDIAIPQNGEPVSVQEVKCCIFQIKELIISRLNQAVVNKLISSVDYLRESFVGTLERCLRSLEKSQQESSSHVTSNHLKQILNAAYHVEVTFNSGSTVTRMVWEQIVQIIQRITWVSPPTITPEWKRRVAQDAIESLSASKLAKSICSQFCKRLKSSHEAFAASLKQLEVGHSGRLEKTNDLWLRVRKDHAPRLARLSLESRSLQDVLLHGKPRIGRELGRGQYGVVYLCDSWGGHFPCALKSVVPPDEKHWNDLALEFHYMRSLPKHERLVDLHGSVIDYSYGGGSSIAVLLITERLHRDLYVGLKTGLSLETRLQIALDVVEGIRFLHNQGLVHRDIKLKNVLLDKKHRAKITDLGFCKPEAMMSGSIVGTPIHMAPELFSGKYDNSVDVYAFGILFWYICSGSVKLPEAFEKCASKDHLWNNVRKGARPERLAIFDEECWKLMEACWNGDPSQRPLMGIVQPMLQGIMDRLCRAQETGKALEDST.

The segment covering 1–19 has biased composition (basic and acidic residues); it reads MQKDGTRSSRRMEEGDRRN. A disordered region spans residues 1 to 29; the sequence is MQKDGTRSSRRMEEGDRRNGSTGSSGSVS. The Protein kinase domain maps to 643–897; it reads PRIGRELGRG…PLMGIVQPML (255 aa). ATP contacts are provided by residues 649-657 and lysine 672; that span reads LGRGQYGVV. Residue aspartate 768 is the Proton acceptor of the active site.

The protein belongs to the protein kinase superfamily. Ser/Thr protein kinase family.

It is found in the cytoplasm. It localises to the cell membrane. Its subcellular location is the apical cell membrane. The protein localises to the basolateral cell membrane. The protein resides in the cell junction. It carries out the reaction L-seryl-[protein] + ATP = O-phospho-L-seryl-[protein] + ADP + H(+). The catalysed reaction is L-threonyl-[protein] + ATP = O-phospho-L-threonyl-[protein] + ADP + H(+). It catalyses the reaction L-tyrosyl-[protein] + ATP = O-phospho-L-tyrosyl-[protein] + ADP + H(+). Functionally, may act as a positive regulator of ERK phosphorylation downstream of fibroblast growth factor-receptor activation. May induce both caspase-dependent apoptosis and caspase-independent cell death. May play a role in the embryonic development. The chain is Dual serine/threonine and tyrosine protein kinase (dstyk) from Xenopus tropicalis (Western clawed frog).